The sequence spans 146 residues: Transcriptional regulator MraZ (146 aa).

SpoVT-AbrB domains follow at residues 4 to 46 and 75 to 118; these read SYEK…SKKS and TIEV…SKEK.

This sequence belongs to the MraZ family. In terms of assembly, forms oligomers.

Its subcellular location is the cytoplasm. The protein resides in the nucleoid. The sequence is that of Transcriptional regulator MraZ from Mycoplasma mobile (strain ATCC 43663 / 163K / NCTC 11711) (Mesomycoplasma mobile).